Consider the following 614-residue polypeptide: Zinc metalloproteinase-disintegrin-like VLAIP-B (614 aa).

The signal sequence occupies residues 1–20 (MMQVLLVTICLAVFPYQGSS). Residues 21–193 (IILESGNVND…KASQLNLTPE (173 aa)) constitute a propeptide that is removed on maturation. The residue at position 194 (Gln-194) is a Pyrrolidone carboxylic acid. In terms of domain architecture, Peptidase M12B spans 202 to 398 (KYVELVIVAD…KMPQCILNKP (197 aa)). Glu-205 lines the Ca(2+) pocket. N-linked (GlcNAc...) asparagine glycosylation is present at Asn-262. Residue Asp-289 participates in Ca(2+) binding. 3 disulfides stabilise this stretch: Cys-313–Cys-393, Cys-353–Cys-377, and Cys-355–Cys-360. Residue His-338 coordinates Zn(2+). The active site involves Glu-339. Residues His-342 and His-348 each coordinate Zn(2+). Residues Cys-393, Asn-396, Val-408, Asn-411, Phe-413, Glu-415, Glu-418, and Asp-421 each coordinate Ca(2+). The 87-residue stretch at 406-492 (PAVCGNYFVE…ECPTDQFQRN (87 aa)) folds into the Disintegrin domain. 14 disulfide bridges follow: Cys-409/Cys-438, Cys-420/Cys-433, Cys-422/Cys-428, Cys-432/Cys-455, Cys-446/Cys-452, Cys-451/Cys-477, Cys-464/Cys-484, Cys-471/Cys-503, Cys-496/Cys-508, Cys-515/Cys-565, Cys-530/Cys-576, Cys-543/Cys-553, Cys-560/Cys-602, and Cys-596/Cys-607. A D/ECD-tripeptide motif is present at residues 470–472 (ECD). N-linked (GlcNAc...) asparagine glycosylation is found at Asn-505, Asn-547, and Asn-568.

This sequence belongs to the venom metalloproteinase (M12B) family. P-III subfamily. P-IIIc sub-subfamily. Heterodimer; disulfide-linked. Zn(2+) is required as a cofactor. Post-translationally, the N-terminus is blocked. Expressed by the venom gland.

It is found in the secreted. Its activity is regulated as follows. Inhibited by EDTA or 1,10-phenanthroline. Not inhibited by PMSF. This metalloproteinase hydrolyzes azocasein, and insulin B-chain (at the '38-Ala-|-Leu-39' bond). Also hydrolyzes the Aalpha-chain (FGA) and more slowly the Bbeta-chain of fibrinogen (FGB), without affecting the gamma-chain. Cleaves alpha-chain of fibrinogen at '432-Lys-|-Leu-433' and '535-Pro-|-Met-536' bonds. Does not cleave fibrin. Inhibits endothelial cell adhesion to extracellular matrix proteins such as fibrinogen, fibronectin, vitronectin, collagen I, and collagen IV. Induces apoptosis in vascular endothelial cells. This Macrovipera lebetinus (Levantine viper) protein is Zinc metalloproteinase-disintegrin-like VLAIP-B.